Reading from the N-terminus, the 398-residue chain is Serine/threonine-protein kinase UL13 (398 aa).

Gly residues predominate over residues 1–10; sequence MAAGGGGGGV. A disordered region spans residues 1 to 44; it reads MAAGGGGGGVSRAALARPPIHRGTSAPGGAIAAAGGDGDGDEAS. The 319-residue stretch at 80–398 folds into the Protein kinase domain; sequence TGDPVAVGAG…GGARFAELAA (319 aa). ATP-binding positions include 86–94 and lysine 103; that span reads VGAGSYGSV. Aspartate 194 serves as the catalytic Proton acceptor.

It belongs to the protein kinase superfamily. Ser/Thr protein kinase family. Post-translationally, autophosphorylated.

It localises to the virion tegument. The protein localises to the host nucleus. The protein resides in the host cytoplasm. Its subcellular location is the host endoplasmic reticulum. It catalyses the reaction L-seryl-[protein] + ATP = O-phospho-L-seryl-[protein] + ADP + H(+). It carries out the reaction L-threonyl-[protein] + ATP = O-phospho-L-threonyl-[protein] + ADP + H(+). Multifunctional serine/threonine kinase that plays a role in several processes including egress of virus particles from the nucleus, modulation of the actin cytoskeleton and regulation of viral and cellular gene expression. Regulates the nuclear localization of viral envelopment factors UL34 and UL31, by phosphorylating the US3 kinase, indicating a role in nuclear egress. Disrupts host nuclear lamins, including LMNA and LMNB1. Phosphorylates the viral Fc receptor composed of glycoproteins E (gE) and I (gI). Phosphorylation of glycoprotein E (gE) by UL13 alters its subcellular localization, from the host early endosome to the plasma membrane. Participates in the transcriptional regulation of cellular and viral mRNAs mainly by phosphorylating the viral transcriptional regulator ICP22. Functions as an antagonist of the host RLR-mediated antiviral responses via suppression of the transcription of cytosolic receptors RIGI and IFIH1. Facilitates immune evasion also by recruiting host RNF5 to initiate the 'Lys-27'-/'Lys-29'-linked polyubiquitination of STING1; leading to its degradation. Blocks host IFN-beta transactivation mediated by the cGAS-STING pathway by phosphorylating host IRF3. In turn, IRF3 binding to the IRF3-responsive promoters and downstream interferon stimulated genes/ISG expression are greatly impaired. Induces the activation of the host DNA damage response via H2AX phosphorylation to improve efficient viral replication and progeny production. The chain is Serine/threonine-protein kinase UL13 (UL13) from Suid herpesvirus 1 (strain NIA-3) (SuHV-1).